A 288-amino-acid polypeptide reads, in one-letter code: Elongation factor Ts (288 aa).

Residues 82–85 (TDFV) form an involved in Mg(2+) ion dislocation from EF-Tu region.

Belongs to the EF-Ts family.

The protein resides in the cytoplasm. In terms of biological role, associates with the EF-Tu.GDP complex and induces the exchange of GDP to GTP. It remains bound to the aminoacyl-tRNA.EF-Tu.GTP complex up to the GTP hydrolysis stage on the ribosome. In Chlorobium limicola (strain DSM 245 / NBRC 103803 / 6330), this protein is Elongation factor Ts.